Here is a 388-residue protein sequence, read N- to C-terminus: uncharacterized protein (388 aa).

8 helical membrane passes run valine 15–leucine 37, glycine 97–tyrosine 119, proline 129–leucine 151, phenylalanine 158–alanine 175, methionine 179–lysine 196, leucine 203–glutamine 225, isoleucine 304–phenylalanine 326, and leucine 347–leucine 369.

It localises to the cell membrane. This is an uncharacterized protein from Aquifex aeolicus (strain VF5).